The chain runs to 314 residues: Ferric-anguibactin transport system permease protein FatD (314 aa).

The next 10 membrane-spanning stretches (helical) occupy residues 1–21 (MTFR…FFGA), 49–69 (VALI…QHIV), 76–96 (PGTT…IVML), 103–123 (ERMF…IAII), 132–152 (ALVP…AEFY), 180–200 (IIFL…RFTV), 207–226 (IASN…LILV), 230–252 (VAVT…NLVA), 265–285 (IVAL…RVVL), and 288–308 (FEVP…LAFL).

The protein belongs to the binding-protein-dependent transport system permease family. FecCD subfamily. In terms of assembly, part of an iron transport system composed of the outer membrane receptor FatA, the periplasmic binding protein FatB and the inner membrane proteins FatC and FatD.

The protein localises to the cell inner membrane. In terms of biological role, involved in the uptake of iron in complex with the siderophore anguibactin. Responsible for the translocation of ferric-anguibactin across the cytoplasmic membrane. The polypeptide is Ferric-anguibactin transport system permease protein FatD (Vibrio anguillarum (strain ATCC 68554 / 775) (Listonella anguillarum)).